The following is a 194-amino-acid chain: MMMMKWIISILTMSIMPVLAYSSSIFRFHSEDVELCYGHLYFDRIYNVVNIKYNPHIPYRYNFINRTLTVDELDDNVFFTHGYFLKHKYGSLNPSLIVSLSGNLKYNDIQCSVNVSCLIKNLATSTSTILTSKHKTYSLHRSTCITIIGYDSIIWYKDINDKYNGIYDFTAICMLIASTLIVTIYVFKKIKMNS.

A signal peptide spans 1-22 (MMMMKWIISILTMSIMPVLAYS). The Extracellular segment spans residues 23 to 165 (SSIFRFHSED…YKDINDKYNG (143 aa)). Asn-65 and Asn-114 each carry an N-linked (GlcNAc...) asparagine; by host glycan. Residues 166-186 (IYDFTAICMLIASTLIVTIYV) form a helical membrane-spanning segment. The Cytoplasmic segment spans residues 187 to 194 (FKKIKMNS).

It belongs to the orthopoxvirus OPG172 protein family.

It localises to the host membrane. It is found in the host cell surface. The sequence is that of Protein A43 (OPG172) from Vaccinia virus (strain Western Reserve) (VACV).